Here is a 334-residue protein sequence, read N- to C-terminus: Nucleoid-associated protein Pfl01_0983 (334 aa).

It belongs to the YejK family.

It localises to the cytoplasm. The protein localises to the nucleoid. This is Nucleoid-associated protein Pfl01_0983 from Pseudomonas fluorescens (strain Pf0-1).